The following is an 83-amino-acid chain: MAKRIMQGVVVSDKMDKTVVVLVERKVRHPLYGKIVRQSKKYKAHDEENQYRTGDMVMIQESRPLSKDKNWVVTERTAVAVEG.

The protein belongs to the universal ribosomal protein uS17 family. In terms of assembly, part of the 30S ribosomal subunit.

Functionally, one of the primary rRNA binding proteins, it binds specifically to the 5'-end of 16S ribosomal RNA. The protein is Small ribosomal subunit protein uS17 of Magnetococcus marinus (strain ATCC BAA-1437 / JCM 17883 / MC-1).